A 311-amino-acid chain; its full sequence is tRNA-cytidine(32) 2-sulfurtransferase (311 aa).

Residues 47–52 (SGGKDS) carry the PP-loop motif motif. [4Fe-4S] cluster contacts are provided by C122, C125, and C213.

It belongs to the TtcA family. As to quaternary structure, homodimer. It depends on Mg(2+) as a cofactor. [4Fe-4S] cluster serves as cofactor.

The protein localises to the cytoplasm. The catalysed reaction is cytidine(32) in tRNA + S-sulfanyl-L-cysteinyl-[cysteine desulfurase] + AH2 + ATP = 2-thiocytidine(32) in tRNA + L-cysteinyl-[cysteine desulfurase] + A + AMP + diphosphate + H(+). Its pathway is tRNA modification. Its function is as follows. Catalyzes the ATP-dependent 2-thiolation of cytidine in position 32 of tRNA, to form 2-thiocytidine (s(2)C32). The sulfur atoms are provided by the cysteine/cysteine desulfurase (IscS) system. The polypeptide is tRNA-cytidine(32) 2-sulfurtransferase (Salmonella paratyphi B (strain ATCC BAA-1250 / SPB7)).